The sequence spans 514 residues: 2,3-bisphosphoglycerate-independent phosphoglycerate mutase (514 aa).

The Mn(2+) site is built by Asp13 and Ser63. Residue Ser63 is the Phosphoserine intermediate of the active site. Substrate is bound by residues His124, 154-155 (RD), Arg186, Arg192, 258-261 (RADR), and Lys332. Positions 399, 403, 440, 441, and 459 each coordinate Mn(2+).

The protein belongs to the BPG-independent phosphoglycerate mutase family. As to quaternary structure, monomer. Mn(2+) serves as cofactor.

The enzyme catalyses (2R)-2-phosphoglycerate = (2R)-3-phosphoglycerate. Its pathway is carbohydrate degradation; glycolysis; pyruvate from D-glyceraldehyde 3-phosphate: step 3/5. Its function is as follows. Catalyzes the interconversion of 2-phosphoglycerate and 3-phosphoglycerate. This is 2,3-bisphosphoglycerate-independent phosphoglycerate mutase from Legionella pneumophila subsp. pneumophila (strain Philadelphia 1 / ATCC 33152 / DSM 7513).